The primary structure comprises 536 residues: Phosphoenolpyruvate carboxykinase (ATP) (536 aa).

The substrate site is built by arginine 61, tyrosine 195, and lysine 201. ATP contacts are provided by residues lysine 201, histidine 220, and 236–244; that span reads GLSGTGKTT. Mn(2+)-binding residues include lysine 201 and histidine 220. Aspartate 257 is a Mn(2+) binding site. 3 residues coordinate ATP: glutamate 285, arginine 322, and threonine 447. Arginine 322 is a binding site for substrate.

This sequence belongs to the phosphoenolpyruvate carboxykinase (ATP) family. Requires Mn(2+) as cofactor.

The protein localises to the cytoplasm. It carries out the reaction oxaloacetate + ATP = phosphoenolpyruvate + ADP + CO2. The protein operates within carbohydrate biosynthesis; gluconeogenesis. In terms of biological role, involved in the gluconeogenesis. Catalyzes the conversion of oxaloacetate (OAA) to phosphoenolpyruvate (PEP) through direct phosphoryl transfer between the nucleoside triphosphate and OAA. In Mesorhizobium japonicum (strain LMG 29417 / CECT 9101 / MAFF 303099) (Mesorhizobium loti (strain MAFF 303099)), this protein is Phosphoenolpyruvate carboxykinase (ATP).